We begin with the raw amino-acid sequence, 148 residues long: Large ribosomal subunit protein bL27m (148 aa).

The transit peptide at 1–30 (MALAVLAWRTRTAVIALLSPPQAAALAVRY) directs the protein to the mitochondrion.

It belongs to the bacterial ribosomal protein bL27 family. Component of the mitochondrial ribosome large subunit (39S) which comprises a 16S rRNA and about 50 distinct proteins.

The protein localises to the mitochondrion. In Bos taurus (Bovine), this protein is Large ribosomal subunit protein bL27m (MRPL27).